We begin with the raw amino-acid sequence, 692 residues long: Proprotein convertase subtilisin/kexin type 9 (692 aa).

Residues 1–30 form the signal peptide; it reads MGTVSSRRSWWPLPLPLLLLLLLGLAGARA. Positions 31–152 are excised as a propeptide; the sequence is QEDEDGDYEE…IEEDSSVFAQ (122 aa). Position 38 is a sulfotyrosine (Tyr-38). Residue Ser-47 is modified to Phosphoserine. Residues 77-149 enclose the Inhibitor I9 domain; the sequence is TYVVVLKEET…VDYIEEDSSV (73 aa). The 290-residue stretch at 155-444 folds into the Peptidase S8 domain; that stretch reads PWNLERITPA…VLTPNLVAAL (290 aa). Catalysis depends on charge relay system residues Asp-186 and His-226. Disulfide bonds link Cys-223–Cys-255 and Cys-323–Cys-358. Ser-386 serves as the catalytic Charge relay system. A C-terminal domain region spans residues 450-692; that stretch reads RAGWQLFCRT…HLVQASQELQ (243 aa). Intrachain disulfides connect Cys-457–Cys-527, Cys-477–Cys-526, and Cys-486–Cys-509. N-linked (GlcNAc...) asparagine glycosylation is present at Asn-533. Cystine bridges form between Cys-534/Cys-601, Cys-552/Cys-600, Cys-562/Cys-588, Cys-608/Cys-679, Cys-626/Cys-678, and Cys-635/Cys-654. Ser-688 is subject to Phosphoserine.

This sequence belongs to the peptidase S8 family. Monomer. Can self-associate to form dimers and higher multimers which may have increased LDLR degrading activity. The precursor protein but not the mature protein may form multimers. Interacts with APOB, VLDLR, LRP8/APOER2 and BACE1. The full-length immature form (pro-PCSK9) interacts with SCNN1A, SCNN1B and SCNN1G. The pro-PCSK9 form (via C-terminal domain) interacts with LDLR. Interacts (via the C-terminal domain) with ANXA2 (via repeat Annexin 1); the interaction inhibits the degradation of LDLR. Requires Ca(2+) as cofactor. In terms of processing, cleavage by furin and PCSK5 generates a truncated inactive protein that is unable to induce LDLR degradation. Undergoes autocatalytic cleavage in the endoplasmic reticulum to release the propeptide from the N-terminus and the cleavage of the propeptide is strictly required for its maturation and activation. The cleaved propeptide however remains associated with the catalytic domain through non-covalent interactions, preventing potential substrates from accessing its active site. As a result, it is secreted from cells as a propeptide-containing, enzymatically inactive protein. Post-translationally, phosphorylation protects the propeptide against proteolysis.

Its subcellular location is the cytoplasm. It is found in the secreted. The protein resides in the endosome. It localises to the lysosome. The protein localises to the cell surface. Its subcellular location is the endoplasmic reticulum. It is found in the golgi apparatus. Its activity is regulated as follows. Its proteolytic activity is autoinhibited by the non-covalent binding of the propeptide to the catalytic domain. Inhibited by EGTA. Functionally, crucial player in the regulation of plasma cholesterol homeostasis. Binds to low-density lipid receptor family members: low density lipoprotein receptor (LDLR), very low density lipoprotein receptor (VLDLR), apolipoprotein E receptor (LRP1/APOER) and apolipoprotein receptor 2 (LRP8/APOER2), and promotes their degradation in intracellular acidic compartments. Acts via a non-proteolytic mechanism to enhance the degradation of the hepatic LDLR through a clathrin LDLRAP1/ARH-mediated pathway. May prevent the recycling of LDLR from endosomes to the cell surface or direct it to lysosomes for degradation. Can induce ubiquitination of LDLR leading to its subsequent degradation. Inhibits intracellular degradation of APOB via the autophagosome/lysosome pathway in a LDLR-independent manner. Involved in the disposal of non-acetylated intermediates of BACE1 in the early secretory pathway. Inhibits epithelial Na(+) channel (ENaC)-mediated Na(+) absorption by reducing ENaC surface expression primarily by increasing its proteasomal degradation. Regulates neuronal apoptosis via modulation of LRP8/APOER2 levels and related anti-apoptotic signaling pathways. The polypeptide is Proprotein convertase subtilisin/kexin type 9 (PCSK9) (Colobus guereza (Mantled guereza)).